A 351-amino-acid polypeptide reads, in one-letter code: UPF0252 protein MJECL39 (351 aa).

A run of 2 helical transmembrane segments spans residues 58–78 (FITF…VWLW) and 91–111 (IIIC…LCGV).

This sequence belongs to the UPF0252 family.

The protein resides in the cell membrane. This is UPF0252 protein MJECL39 from Methanocaldococcus jannaschii (strain ATCC 43067 / DSM 2661 / JAL-1 / JCM 10045 / NBRC 100440) (Methanococcus jannaschii).